A 270-amino-acid polypeptide reads, in one-letter code: Phospholysine phosphohistidine inorganic pyrophosphate phosphatase (270 aa).

Residues Asp-17 and Ser-19 each contribute to the Mg(2+) site. Residues 17–19 (DIS), 54–55 (TN), and Lys-189 each bind substrate. Asp-214 serves as a coordination point for Mg(2+).

It belongs to the HAD-like hydrolase superfamily. As to quaternary structure, homodimer. Requires Mg(2+) as cofactor.

It localises to the cytoplasm. It is found in the nucleus. It catalyses the reaction diphosphate + H2O = 2 phosphate + H(+). Phosphatase that hydrolyzes imidodiphosphate, 3-phosphohistidine and 6-phospholysine. Has broad substrate specificity and can also hydrolyze inorganic diphosphate, but with lower efficiency. The sequence is that of Phospholysine phosphohistidine inorganic pyrophosphate phosphatase (Lhpp) from Rattus norvegicus (Rat).